We begin with the raw amino-acid sequence, 546 residues long: Chaperonin GroEL 2 (546 aa).

Residues 30 to 33, Lys-51, 87 to 91, Gly-415, 479 to 481, and Asp-495 contribute to the ATP site; these read TLGP, DGTTT, and NAA. Residues 526 to 546 form a disordered region; the sequence is KEDAPMPGGMPGGMGGMGMDM. Residues 534–546 are compositionally biased toward gly residues; the sequence is GMPGGMGGMGMDM.

This sequence belongs to the chaperonin (HSP60) family. In terms of assembly, forms a cylinder of 14 subunits composed of two heptameric rings stacked back-to-back. Interacts with the co-chaperonin GroES.

It localises to the cytoplasm. It carries out the reaction ATP + H2O + a folded polypeptide = ADP + phosphate + an unfolded polypeptide.. In terms of biological role, together with its co-chaperonin GroES, plays an essential role in assisting protein folding. The GroEL-GroES system forms a nano-cage that allows encapsulation of the non-native substrate proteins and provides a physical environment optimized to promote and accelerate protein folding. In Burkholderia lata (strain ATCC 17760 / DSM 23089 / LMG 22485 / NCIMB 9086 / R18194 / 383), this protein is Chaperonin GroEL 2.